A 395-amino-acid polypeptide reads, in one-letter code: S-adenosylmethionine synthase (395 aa).

Residue Glu-10 coordinates Mg(2+). Residue His-16 participates in ATP binding. Residue Glu-44 coordinates K(+). Residues Glu-57 and Gln-100 each coordinate L-methionine. ATP contacts are provided by residues 168–170 (DGK), 236–239 (SGRF), 253–254 (RK), Ala-270, Lys-274, and Lys-278. Lys-278 provides a ligand contact to L-methionine.

Belongs to the AdoMet synthase family. As to quaternary structure, homotetramer. It depends on Mn(2+) as a cofactor. Mg(2+) is required as a cofactor. Co(2+) serves as cofactor. The cofactor is K(+).

Its subcellular location is the cytoplasm. It catalyses the reaction L-methionine + ATP + H2O = S-adenosyl-L-methionine + phosphate + diphosphate. Its pathway is amino-acid biosynthesis; S-adenosyl-L-methionine biosynthesis; S-adenosyl-L-methionine from L-methionine: step 1/1. Its function is as follows. Catalyzes the formation of S-adenosylmethionine from methionine and ATP. The reaction comprises two steps that are both catalyzed by the same enzyme: formation of S-adenosylmethionine (AdoMet) and triphosphate, and subsequent hydrolysis of the triphosphate. This chain is S-adenosylmethionine synthase (METK), found in Populus deltoides (Eastern poplar).